We begin with the raw amino-acid sequence, 160 residues long: Cytochrome c-type biogenesis protein CcmE (160 aa).

The Cytoplasmic portion of the chain corresponds to 1–8; sequence MNPRRKKR. Residues 9–29 form a helical; Signal-anchor for type II membrane protein membrane-spanning segment; sequence LGIILAIFFGISATVGLMVYA. At 30 to 160 the chain is on the periplasmic side; sequence LNQNMDLFYT…TTEQKEGNAQ (131 aa). Residues His128 and Tyr132 each coordinate heme.

Belongs to the CcmE/CycJ family.

It is found in the cell inner membrane. Its function is as follows. Heme chaperone required for the biogenesis of c-type cytochromes. Transiently binds heme delivered by CcmC and transfers the heme to apo-cytochromes in a process facilitated by CcmF and CcmH. This chain is Cytochrome c-type biogenesis protein CcmE, found in Vibrio atlanticus (strain LGP32) (Vibrio splendidus (strain Mel32)).